The primary structure comprises 359 residues: MGGCVSATPEEREAKTRSSVIDRQQRQDARQYENTIKILLLGAGESGKSTVVKQMKIIHGDGYSQTEXRSFKSVIYGNLAASMRVVLNAMEKLGIPYGNQASQEQARVILSLSNSLSSYESFPPDVTSAFISLWRDAGVQECFSRAYEYQLNDSAPYYFQNMDRLLREDYVPDEQDVLRSRVQTTGIIETSFRVKQLTYRVVDVGGQRSERRKWIQCFDDVRAVLFVCALSGYDMTLFEDGKTNRLEESLNLFQAICNNKFFVKTSMILFLNKADLFRDKITNSDRHLRLYFTQYTGPDRDVEAASRFIQSEFMERNLNKQKIIYPHLTTATDTTNIKVVFGVVLDTIIRENLEAANLL.

The interval 1-26 is disordered; that stretch reads MGGCVSATPEEREAKTRSSVIDRQQR. A lipid anchor (N-myristoyl glycine) is attached at Gly2. Cys4 carries S-palmitoyl cysteine lipidation. A G-alpha domain is found at 34 to 359; it reads NTIKILLLGA…RENLEAANLL (326 aa). Residues 37–50 are G1 motif; it reads KILLLGAGESGKST. GTP-binding positions include 42–49, 178–184, 203–207, 272–275, and Ala331; these read GAGESGKS, LRSRVQT, DVGGQ, and NKAD. 2 residues coordinate Mg(2+): Ser49 and Thr184. The G2 motif stretch occupies residues 176–184; sequence DVLRSRVQT. The segment at 199–208 is G3 motif; that stretch reads YRVVDVGGQR. A G4 motif region spans residues 268-275; the sequence is ILFLNKAD. Residues 329–334 form a G5 motif region; sequence TTATDT.

Belongs to the G-alpha family. G(i/o/t/z) subfamily. G proteins are composed of 3 units; alpha, beta and gamma. The alpha chain contains the guanine nucleotide binding site.

Functionally, guanine nucleotide-binding proteins (G proteins) are involved as modulators or transducers in various transmembrane signaling systems. The G(o) protein function is not clear. This is Guanine nucleotide-binding protein G(o) subunit alpha from Geodia cydonium (Sponge).